We begin with the raw amino-acid sequence, 598 residues long: MTFQASHRSAWGKSRKKNWQYEGPTQKLFLKRNNVSAPDGPSDPSISVSSEQSGAQQPPALQVERIVDKRKNKKGKTEYLVRWKGYDSEDDTWEPEQHLVNCEEYIHDFNRRHTEKQKESTLTRTNRTSPNNARKQISRSTNSNFSKTSPKALVIGKDHESKNSQLFAASQKFRKNTAPSLSSRKNMDLAKSGIKILVPKSPVKSRTAVDGFQSESPEKLDPVEQGQEDTVAPEVAAEKPVGALLGPGAERARMGSRPRIHPLVPQVPGPVTAAMATGLAVNGKGTSPFMDALTANGTTNIQTSVTGVTASKRKFIDDRRDQPFDKRLRFSVRQTESAYRYRDIVVRKQDGFTHILLSTKSSENNSLNPEVMREVQSALSTAAADDSKLVLLSAVGSVFCCGLDFIYFIRRLTDDRKRESTKMAEAIRNFVNTFIQFKKPIIVAVNGPAIGLGASILPLCDVVWANEKAWFQTPYTTFGQSPDGCSTVMFPKIMGGASANEMLLSGRKLTAQEACGKGLVSQVFWPGTFTQEVMVRIKELASCNPVVLEESKALVRCNMKMELEQANERECEVLKKIWGSAQGMDSMLKYLQRKIDEF.

Residues 1 to 76 form a disordered region; that stretch reads MTFQASHRSA…VDKRKNKKGK (76 aa). A compositionally biased stretch (polar residues) spans 44–56; sequence PSISVSSEQSGAQ. In terms of domain architecture, Chromo spans 61-121; that stretch reads LQVERIVDKR…RHTEKQKEST (61 aa). The interaction with EZH2 stretch occupies residues 61–309; it reads LQVERIVDKR…NIQTSVTGVT (249 aa). Positions 65–76 are enriched in basic and acidic residues; that stretch reads RIVDKRKNKKGK. The residue at position 88 (Ser88) is a Phosphoserine. A compositionally biased stretch (basic and acidic residues) spans 112-121; that stretch reads RHTEKQKEST. The interval 112-149 is disordered; it reads RHTEKQKESTLTRTNRTSPNNARKQISRSTNSNFSKTS. Polar residues predominate over residues 122–149; it reads LTRTNRTSPNNARKQISRSTNSNFSKTS. Lys135 carries the N6,N6,N6-trimethyllysine; by EHMT2; alternate modification. The residue at position 135 (Lys135) is an N6,N6-dimethyllysine; by EHMT2; alternate. Position 135 is an N6-methyllysine; by EHMT2; alternate (Lys135). Residues Ser170, Ser201, and Ser216 each carry the phosphoserine modification. The segment at 204-226 is disordered; the sequence is KSRTAVDGFQSESPEKLDPVEQG. Positions 362–594 are acetyl-CoA-binding domain; that stretch reads SENNSLNPEV…DSMLKYLQRK (233 aa).

As to quaternary structure, forms multimers and multimerization is required for stable binding to chromatin. Interacts with HDAC1 and HDAC2 via its C-terminal acetyl-CoA-binding domain. Interacts with EZH2, EED, SUZ12, REST, EHMT1 and EHMT2. Part of a complex containing at least CDYL, REST, WIZ, SETB1, EHMT1 and EHMT2. Part of a complex containing at least CDYL, MIER1, MIER2, HDAC1 and HDAC2. Interacts with CHAF1A and CHAF1B; bridging the CAF-1 complex to the MCM2-7 (MCM) complex. Interacts with MCM3 and MCM5; bridging the CAF-1 complex to the MCM2-7 (MCM) complex. Recruited to Xist RNA-coated X chromosome. Interacts with EHMT2 and PRDM9; interaction only takes place when PRDM9 is bound to hotspot DNA. Expressed in the hippocampus with reduced expression in epileptic tissue compared to normal adjacent tissue (at protein level). Ubiquitous. Expressed at moderate levels in all tissues examined. Isoform 2: Most abundantly expressed isoform.

The protein resides in the nucleus. It is found in the chromosome. It catalyses the reaction 3-hydroxybutanoyl-CoA = (2E)-butenoyl-CoA + H2O. Chromatin reader protein that recognizes and binds histone H3 trimethylated at 'Lys-9', dimethylated at 'Lys-27' and trimethylated at 'Lys-27' (H3K9me3, H3K27me2 and H3K27me3, respectively). Part of multimeric repressive chromatin complexes, where it is required for transmission and restoration of repressive histone marks, thereby preserving the epigenetic landscape. Required for chromatin targeting and maximal enzymatic activity of Polycomb repressive complex 2 (PRC2); acts as a positive regulator of PRC2 activity by bridging the pre-existing histone H3K27me3 and newly recruited PRC2 on neighboring nucleosomes. Acts as a corepressor for REST by facilitating histone-lysine N-methyltransferase EHMT2 recruitment and H3K9 dimethylation at REST target genes for repression. Involved in X chromosome inactivation in females: recruited to Xist RNA-coated X chromosome and facilitates propagation of H3K9me2 by anchoring EHMT2. Promotes EZH2 accumulation and H3K27me3 methylation at DNA double strand breaks (DSBs), thereby facilitating transcriptional repression at sites of DNA damage and homology-directed repair of DSBs. Required for neuronal migration during brain development by repressing expression of RHOA. By repressing the expression of SCN8A, contributes to the inhibition of intrinsic neuronal excitability and epileptogenesis. In addition to acting as a chromatin reader, acts as a hydro-lyase. Shows crotonyl-coA hydratase activity by mediating the conversion of crotonyl-CoA ((2E)-butenoyl-CoA) to beta-hydroxybutyryl-CoA (3-hydroxybutanoyl-CoA), thereby acting as a negative regulator of histone crotonylation. Histone crotonylation is required during spermatogenesis; down-regulation of histone crotonylation by CDYL regulates the reactivation of sex chromosome-linked genes in round spermatids and histone replacement in elongating spermatids. By regulating histone crotonylation and trimethylation of H3K27, may be involved in stress-induced depression-like behaviors, possibly by regulating VGF expression. In terms of biological role, not able to recognize and bind histone H3K9me3, histone H3K27me2 and histone H3K27me3, due to the presence of a N-terminal extension that inactivates the chromo domain. Its function is as follows. Not able to recognize and bind histone H3K9me3, histone H3K27me2 and histone H3K27me3, due to the absence of the chromo domain. Acts as a negative regulator of isoform 2 by displacing isoform 2 from chromatin. The chain is Chromodomain Y-like protein from Homo sapiens (Human).